The chain runs to 486 residues: FAD-dependent oxidoreductase domain-containing protein 1 (486 aa).

The helical transmembrane segment at 62 to 82 (EHSDVVIVGGGVLGLSVAYWL) threads the bilayer.

Associates with components of the mitochondrial respiratory chain complex I. It depends on FAD as a cofactor.

The protein localises to the mitochondrion inner membrane. Its function is as follows. Required for the assembly of the mitochondrial membrane respiratory chain NADH dehydrogenase (Complex I). Involved in mid-late stages of complex I assembly. This chain is FAD-dependent oxidoreductase domain-containing protein 1, found in Homo sapiens (Human).